Consider the following 175-residue polypeptide: MLPVYPFLAPVFDTFESTRALFLEATLSLQEPWWFRLLSFFRSPRYTGLADVVRAIACEREADFTAITPSSLIEDIAEGRFVMLVGLMEYLRFDTAGQGIVSFAFLSYLIDRVTKQSPLAHFTVVEVVSLVVWRTVKLSRRRERRWVSQLSTLAEEDEDEEGTTLTTEAEQESSA.

A disordered region spans residues 153-175 (LAEEDEDEEGTTLTTEAEQESSA).

It belongs to the adenoviridae E1B 19 kDa protein family.

The sequence is that of E1B protein, small T-antigen from Mus musculus (Mouse).